The chain runs to 473 residues: Photosystem II CP43 reaction center protein (473 aa).

Residues 1 to 14 constitute a propeptide that is removed on maturation; that stretch reads MKTLYSPRRFYPVE. T15 is modified (N-acetylthreonine). T15 is subject to Phosphothreonine. Transmembrane regions (helical) follow at residues 69 to 93, 134 to 155, 178 to 200, 255 to 275, and 291 to 312; these read LFEV…PHLA, LIGP…KDRN, KALF…RKIT, KPFA…LSYS, and WFNN…ASQA. E367 provides a ligand contact to [CaMn4O5] cluster. Residues 447–471 form a helical membrane-spanning segment; sequence RARAAAAGFEKGIDRDLEPVLFMTP.

It belongs to the PsbB/PsbC family. PsbC subfamily. As to quaternary structure, PSII is composed of 1 copy each of membrane proteins PsbA, PsbB, PsbC, PsbD, PsbE, PsbF, PsbH, PsbI, PsbJ, PsbK, PsbL, PsbM, PsbT, PsbX, PsbY, PsbZ, Psb30/Ycf12, at least 3 peripheral proteins of the oxygen-evolving complex and a large number of cofactors. It forms dimeric complexes. It depends on Binds multiple chlorophylls and provides some of the ligands for the Ca-4Mn-5O cluster of the oxygen-evolving complex. It may also provide a ligand for a Cl- that is required for oxygen evolution. PSII binds additional chlorophylls, carotenoids and specific lipids. as a cofactor.

It is found in the plastid. The protein localises to the chloroplast thylakoid membrane. In terms of biological role, one of the components of the core complex of photosystem II (PSII). It binds chlorophyll and helps catalyze the primary light-induced photochemical processes of PSII. PSII is a light-driven water:plastoquinone oxidoreductase, using light energy to abstract electrons from H(2)O, generating O(2) and a proton gradient subsequently used for ATP formation. This Welwitschia mirabilis (Tree tumbo) protein is Photosystem II CP43 reaction center protein.